The primary structure comprises 373 residues: Leucine aminopeptidase 1 (373 aa).

Residues 1-18 (MKLLSVLALSATATSVLG) form the signal peptide. A glycan (N-linked (GlcNAc...) asparagine) is linked at asparagine 136. Residues histidine 176 and aspartate 195 each coordinate Zn(2+). An N-linked (GlcNAc...) asparagine glycan is attached at asparagine 196. The Zn(2+) site is built by glutamate 234 and aspartate 261. A glycan (N-linked (GlcNAc...) asparagine) is linked at asparagine 284. A disulfide bridge connects residues cysteine 310 and cysteine 314. Histidine 343 serves as a coordination point for Zn(2+).

It belongs to the peptidase M28 family. M28E subfamily. As to quaternary structure, monomer. It depends on Zn(2+) as a cofactor.

The protein localises to the secreted. Its function is as follows. Extracellular aminopeptidase which contributes to pathogenicity. In Trichophyton equinum (Horse ringworm fungus), this protein is Leucine aminopeptidase 1 (LAP1).